We begin with the raw amino-acid sequence, 394 residues long: Na(+)/H(+) antiporter NhaA 2 (394 aa).

11 consecutive transmembrane segments (helical) span residues 13–33, 58–78, 93–113, 124–144, 153–173, 176–196, 208–228, 260–280, 291–311, 327–347, and 361–381; these read FGGV…NGFL, LILW…GLEL, IALP…IFWA, GWAI…MLLG, IFLL…IAIF, TKLS…LWVL, ILVT…ATIA, YFIL…GVQI, IFFG…YIFI, FYGV…VNSL, and LGIL…LLVF.

The protein belongs to the NhaA Na(+)/H(+) (TC 2.A.33) antiporter family.

The protein localises to the cell inner membrane. The enzyme catalyses Na(+)(in) + 2 H(+)(out) = Na(+)(out) + 2 H(+)(in). Functionally, na(+)/H(+) antiporter that extrudes sodium in exchange for external protons. This is Na(+)/H(+) antiporter NhaA 2 from Campylobacter fetus subsp. fetus (strain 82-40).